The following is a 122-amino-acid chain: NADH-quinone oxidoreductase subunit A (122 aa).

Transmembrane regions (helical) follow at residues Met10–Gly30, Ile66–Val86, and Leu91–Ala111.

Belongs to the complex I subunit 3 family. NDH-1 is composed of 14 different subunits. Subunits NuoA, H, J, K, L, M, N constitute the membrane sector of the complex.

The protein resides in the cell membrane. It carries out the reaction a quinone + NADH + 5 H(+)(in) = a quinol + NAD(+) + 4 H(+)(out). NDH-1 shuttles electrons from NADH, via FMN and iron-sulfur (Fe-S) centers, to quinones in the respiratory chain. The immediate electron acceptor for the enzyme in this species is believed to be a menaquinone. Couples the redox reaction to proton translocation (for every two electrons transferred, four hydrogen ions are translocated across the cytoplasmic membrane), and thus conserves the redox energy in a proton gradient. The protein is NADH-quinone oxidoreductase subunit A of Bacillus anthracis.